Reading from the N-terminus, the 391-residue chain is MSLNPRDVVIVDFGRTPMGRSKGGMHRNTRAEDMSAHLISKLLERNDKVDPKEVEDVIWGCVNQTLEQGWNIARMASLMTPIPHTSAAQTVSRLCGSSMSALHTAAQAIMTGNGDVFVIGGVEHMGHVSMMHGVDPNPHLSLHAAKASGMMGLTAEMLGKMHGITREQQDLFGVRSHQLAHKATVEGKFKDEIIPMQGYDENGFLKVFDFDETIRPETTLEGLASLKPAFNPKGGTVTAGTSSQITDGASCMIVMSGQRAMDLGIQPLAVIRSMAVAGVDPAIMGYGPVPSTQKALKRAGLTMADIDFIELNEAFAAQALPVLKDLKVLDKMDEKVNLHGGAIALGHPFGCSGARISGTLLNVMKQNGGTLGVATMCVGLGQGITTVFERV.

Catalysis depends on cysteine 95, which acts as the Acyl-thioester intermediate. Catalysis depends on proton acceptor residues histidine 347 and cysteine 377.

It belongs to the thiolase-like superfamily. Thiolase family. Heterotetramer of two alpha chains (FadB) and two beta chains (FadA).

Its subcellular location is the cytoplasm. It carries out the reaction an acyl-CoA + acetyl-CoA = a 3-oxoacyl-CoA + CoA. It functions in the pathway lipid metabolism; fatty acid beta-oxidation. Functionally, catalyzes the final step of fatty acid oxidation in which acetyl-CoA is released and the CoA ester of a fatty acid two carbons shorter is formed. This chain is 3-ketoacyl-CoA thiolase, found in Pseudomonas putida (Arthrobacter siderocapsulatus).